Reading from the N-terminus, the 1364-residue chain is Serine protease SepA autotransporter (1364 aa).

The signal sequence occupies residues 1–56; it reads MNKIYYLKYCHITKSLIAVSELARRVTCKSHRRLSRRVILTSVAALSLSSAWPALS. The 251-residue stretch at 57 to 307 folds into the Peptidase S6 domain; it reads ATVSAEIPYQ…VVTTQDFLGQ (251 aa). Residues His134, Asp162, and Ser267 each act as charge relay system in the active site. The region spanning 1098–1364 is the Autotransporter domain; sequence DTQGDAGVWA…AINANFRYVF (267 aa).

In terms of processing, cleaved to release the mature protein from the outer membrane. Cleavage is performed by an unknown protease.

It localises to the periplasm. The protein resides in the secreted. It is found in the cell surface. The protein localises to the cell outer membrane. Its activity is regulated as follows. Inhibited by the serine protease inhibitor PMSF, but not by benzamidine, alpha 1-antitrypsin, alpha 1-antichymotrypsin. Not inhibited by metalloprotease inhibitors such as EDTA and orthophenanthroline. Major protein secreted in laboratory media showing proteolytic activity. May be involved in invasion and destruction of host intestinal epithelium. This is Serine protease SepA autotransporter (sepA) from Shigella flexneri.